We begin with the raw amino-acid sequence, 370 residues long: 4-hydroxy-3-methylbut-2-en-1-yl diphosphate synthase (flavodoxin) (370 aa).

[4Fe-4S] cluster is bound by residues Cys-270, Cys-273, Cys-305, and Glu-312.

This sequence belongs to the IspG family. It depends on [4Fe-4S] cluster as a cofactor.

It carries out the reaction (2E)-4-hydroxy-3-methylbut-2-enyl diphosphate + oxidized [flavodoxin] + H2O + 2 H(+) = 2-C-methyl-D-erythritol 2,4-cyclic diphosphate + reduced [flavodoxin]. Its pathway is isoprenoid biosynthesis; isopentenyl diphosphate biosynthesis via DXP pathway; isopentenyl diphosphate from 1-deoxy-D-xylulose 5-phosphate: step 5/6. Its function is as follows. Converts 2C-methyl-D-erythritol 2,4-cyclodiphosphate (ME-2,4cPP) into 1-hydroxy-2-methyl-2-(E)-butenyl 4-diphosphate. In Ectopseudomonas mendocina (strain ymp) (Pseudomonas mendocina), this protein is 4-hydroxy-3-methylbut-2-en-1-yl diphosphate synthase (flavodoxin).